The sequence spans 224 residues: Toxin coregulated pilin (224 aa).

Residues methionine 1–glycine 25 constitute a propeptide, atypical leader sequence. N-methylmethionine is present on methionine 26. A helical transmembrane segment spans residues methionine 26–valine 46. Cysteine 145 and cysteine 211 are joined by a disulfide.

The protein resides in the fimbrium. The protein localises to the membrane. In terms of biological role, major component of the toxin co-regulated pilus (tcp) which is a type IV pilus essential for bacterial aggregation and subsequent colonization in the host small intestine. In Vibrio cholerae, this protein is Toxin coregulated pilin (tcpA).